A 166-amino-acid polypeptide reads, in one-letter code: Small ribosomal subunit protein uS5 (166 aa).

The region spanning 11–74 (LNEKLIAVNR…EKARRNMFTI (64 aa)) is the S5 DRBM domain.

The protein belongs to the universal ribosomal protein uS5 family. In terms of assembly, part of the 30S ribosomal subunit. Contacts proteins S4 and S8.

With S4 and S12 plays an important role in translational accuracy. Its function is as follows. Located at the back of the 30S subunit body where it stabilizes the conformation of the head with respect to the body. The chain is Small ribosomal subunit protein uS5 from Aliivibrio fischeri (strain ATCC 700601 / ES114) (Vibrio fischeri).